The sequence spans 85 residues: Small ribosomal subunit protein uS17 (85 aa).

The protein belongs to the universal ribosomal protein uS17 family. Part of the 30S ribosomal subunit.

Its function is as follows. One of the primary rRNA binding proteins, it binds specifically to the 5'-end of 16S ribosomal RNA. This is Small ribosomal subunit protein uS17 from Acinetobacter baumannii (strain AB307-0294).